The sequence spans 364 residues: Dihydroorotate dehydrogenase (quinone) (364 aa).

Residues Ala-78–Lys-82 and Thr-102 contribute to the FMN site. A substrate-binding site is contributed by Lys-82. Asn-127–Phe-131 is a binding site for substrate. Residues Asn-156 and Asn-189 each contribute to the FMN site. Residue Asn-189 coordinates substrate. The active-site Nucleophile is Ser-192. Position 194 (Asn-194) interacts with substrate. Positions 227 and 255 each coordinate FMN. Asn-256–Thr-257 contributes to the substrate binding site. Residues Gly-285, Gly-314, and Tyr-335–Thr-336 each bind FMN.

It belongs to the dihydroorotate dehydrogenase family. Type 2 subfamily. In terms of assembly, monomer. The cofactor is FMN.

It localises to the cell membrane. The enzyme catalyses (S)-dihydroorotate + a quinone = orotate + a quinol. It functions in the pathway pyrimidine metabolism; UMP biosynthesis via de novo pathway; orotate from (S)-dihydroorotate (quinone route): step 1/1. Its function is as follows. Catalyzes the conversion of dihydroorotate to orotate with quinone as electron acceptor. In Thermosynechococcus vestitus (strain NIES-2133 / IAM M-273 / BP-1), this protein is Dihydroorotate dehydrogenase (quinone).